Consider the following 584-residue polypeptide: 65 kDa protein (584 aa).

In terms of domain architecture, Toprim spans 459–548 (YDLYIAESAI…TKKVENWLPP (90 aa)).

This is 65 kDa protein from Zymomonas mobilis subsp. mobilis (strain ATCC 10988 / DSM 424 / LMG 404 / NCIMB 8938 / NRRL B-806 / ZM1).